A 381-amino-acid chain; its full sequence is Chorismate synthase (381 aa).

NADP(+) is bound by residues Arg-41 and Arg-47. Residues 127–129, 247–248, Gly-291, 306–310, and Arg-332 contribute to the FMN site; these read RAS, QA, and KPIPT.

This sequence belongs to the chorismate synthase family. In terms of assembly, homotetramer. The cofactor is FMNH2.

The catalysed reaction is 5-O-(1-carboxyvinyl)-3-phosphoshikimate = chorismate + phosphate. Its pathway is metabolic intermediate biosynthesis; chorismate biosynthesis; chorismate from D-erythrose 4-phosphate and phosphoenolpyruvate: step 7/7. Its function is as follows. Catalyzes the anti-1,4-elimination of the C-3 phosphate and the C-6 proR hydrogen from 5-enolpyruvylshikimate-3-phosphate (EPSP) to yield chorismate, which is the branch point compound that serves as the starting substrate for the three terminal pathways of aromatic amino acid biosynthesis. This reaction introduces a second double bond into the aromatic ring system. In Anaeromyxobacter sp. (strain K), this protein is Chorismate synthase.